The following is a 231-amino-acid chain: Ribosome maturation factor RimM (231 aa).

Positions 1–29 are disordered; that stretch reads MSERDSGSSGRAKAKRQPGAKAPFGPFVR. Residues 150 to 231 enclose the PRC barrel domain; that stretch reads TDEYYWVDLV…KIIVDWEADY (82 aa).

Belongs to the RimM family. Binds ribosomal protein uS19.

It is found in the cytoplasm. Functionally, an accessory protein needed during the final step in the assembly of 30S ribosomal subunit, possibly for assembly of the head region. Essential for efficient processing of 16S rRNA. May be needed both before and after RbfA during the maturation of 16S rRNA. It has affinity for free ribosomal 30S subunits but not for 70S ribosomes. This Paraburkholderia phymatum (strain DSM 17167 / CIP 108236 / LMG 21445 / STM815) (Burkholderia phymatum) protein is Ribosome maturation factor RimM.